A 597-amino-acid polypeptide reads, in one-letter code: Arginine--tRNA ligase (597 aa).

The short motif at proline 137 to histidine 147 is the 'HIGH' region element.

It belongs to the class-I aminoacyl-tRNA synthetase family. As to quaternary structure, monomer.

The protein resides in the cytoplasm. The enzyme catalyses tRNA(Arg) + L-arginine + ATP = L-arginyl-tRNA(Arg) + AMP + diphosphate. The sequence is that of Arginine--tRNA ligase from Parasynechococcus marenigrum (strain WH8102).